We begin with the raw amino-acid sequence, 397 residues long: Tryptophan synthase beta chain (397 aa).

Lysine 87 carries the post-translational modification N6-(pyridoxal phosphate)lysine.

The protein belongs to the TrpB family. In terms of assembly, tetramer of two alpha and two beta chains. Pyridoxal 5'-phosphate is required as a cofactor.

The catalysed reaction is (1S,2R)-1-C-(indol-3-yl)glycerol 3-phosphate + L-serine = D-glyceraldehyde 3-phosphate + L-tryptophan + H2O. Its pathway is amino-acid biosynthesis; L-tryptophan biosynthesis; L-tryptophan from chorismate: step 5/5. Its function is as follows. The beta subunit is responsible for the synthesis of L-tryptophan from indole and L-serine. The protein is Tryptophan synthase beta chain of Salmonella choleraesuis (strain SC-B67).